Reading from the N-terminus, the 74-residue chain is uncharacterized protein (74 aa).

Residues 29–63 adopt a coiled-coil conformation; it reads LNSKKSALQKDKELQQQAKAQESALAGEELRRRAL.

This is an uncharacterized protein from Pseudoalteromonas phage PM2 (Bacteriophage PM2).